Reading from the N-terminus, the 246-residue chain is Pyridoxine 5'-phosphate synthase (246 aa).

Asparagine 12 contacts 3-amino-2-oxopropyl phosphate. 14 to 15 is a 1-deoxy-D-xylulose 5-phosphate binding site; sequence DH. Arginine 23 lines the 3-amino-2-oxopropyl phosphate pocket. The active-site Proton acceptor is histidine 48. 1-deoxy-D-xylulose 5-phosphate is bound by residues arginine 50 and histidine 55. Glutamate 75 acts as the Proton acceptor in catalysis. Threonine 105 serves as a coordination point for 1-deoxy-D-xylulose 5-phosphate. Histidine 196 acts as the Proton donor in catalysis. 3-amino-2-oxopropyl phosphate-binding positions include glycine 197 and 218–219; that span reads GH.

Belongs to the PNP synthase family. In terms of assembly, homooctamer; tetramer of dimers.

It localises to the cytoplasm. The enzyme catalyses 3-amino-2-oxopropyl phosphate + 1-deoxy-D-xylulose 5-phosphate = pyridoxine 5'-phosphate + phosphate + 2 H2O + H(+). Its pathway is cofactor biosynthesis; pyridoxine 5'-phosphate biosynthesis; pyridoxine 5'-phosphate from D-erythrose 4-phosphate: step 5/5. Catalyzes the complicated ring closure reaction between the two acyclic compounds 1-deoxy-D-xylulose-5-phosphate (DXP) and 3-amino-2-oxopropyl phosphate (1-amino-acetone-3-phosphate or AAP) to form pyridoxine 5'-phosphate (PNP) and inorganic phosphate. The protein is Pyridoxine 5'-phosphate synthase of Nitrosococcus oceani (strain ATCC 19707 / BCRC 17464 / JCM 30415 / NCIMB 11848 / C-107).